Here is a 444-residue protein sequence, read N- to C-terminus: Killer cell immunoglobulin-like receptor 3DL1 (444 aa).

The first 21 residues, 1–21 (MSLMVVSMACVGLFLVQRAGP), serve as a signal peptide directing secretion. Residues 22-340 (HMGGQDKPFL…SKSGNPRHLH (319 aa)) lie on the Extracellular side of the membrane. Ig-like C2-type domains lie at 42–102 (GGHV…HPHS), 137–202 (GERV…VTHT), and 237–300 (GESV…FRHS). Cystine bridges form between Cys-49–Cys-95, Cys-144–Cys-195, and Cys-244–Cys-293. 3 N-linked (GlcNAc...) asparagine glycosylation sites follow: Asn-92, Asn-179, and Asn-273. Positions 315-334 (VTGNPSSSWPSPTEPSSKSG) are disordered. Over residues 319-333 (PSSSWPSPTEPSSKS) the composition is skewed to low complexity. A helical membrane pass occupies residues 341–360 (ILIGTSVVIILFILLLFFLL). The Cytoplasmic portion of the chain corresponds to 361 to 444 (HLWCSNKKNA…KPRSKVVSCP (84 aa)). 2 disordered regions span residues 375–394 (QEPAGNRTANSEDSDEQDPE) and 409–444 (RKITRPSQRPKTPPTDTILYTELPNAKPRSKVVSCP).

It belongs to the immunoglobulin superfamily.

It is found in the cell membrane. In terms of biological role, receptor on natural killer (NK) cells for HLA Bw4 allele. Inhibits the activity of NK cells thus preventing cell lysis. This is Killer cell immunoglobulin-like receptor 3DL1 from Homo sapiens (Human).